The sequence spans 94 residues: Small ribosomal subunit protein uS19 (94 aa).

Belongs to the universal ribosomal protein uS19 family.

Its function is as follows. Protein S19 forms a complex with S13 that binds strongly to the 16S ribosomal RNA. In Clostridium botulinum (strain Langeland / NCTC 10281 / Type F), this protein is Small ribosomal subunit protein uS19.